We begin with the raw amino-acid sequence, 92 residues long: MPRSLKKGPFVDEKLENKIVIARNTKSSHIIKTWSRRSTVTPEMVGLTFAVHNGKKFIPVFVTENMVGHKLGEFSPTRTFYGHAGSKKSKVR.

This sequence belongs to the universal ribosomal protein uS19 family.

Functionally, protein S19 forms a complex with S13 that binds strongly to the 16S ribosomal RNA. The polypeptide is Small ribosomal subunit protein uS19 (Desulfosudis oleivorans (strain DSM 6200 / JCM 39069 / Hxd3) (Desulfococcus oleovorans)).